The primary structure comprises 486 residues: Betaine aldehyde dehydrogenase (486 aa).

2 residues coordinate K(+): threonine 23 and aspartate 90. Residue 147–149 (GAW) coordinates NAD(+). The active-site Charge relay system is the lysine 159. Residues 173 to 176 (KPSE) and 226 to 229 (ESGT) contribute to the NAD(+) site. Residue leucine 241 participates in K(+) binding. Glutamate 247 acts as the Proton acceptor in catalysis. 3 residues coordinate NAD(+): glycine 249, cysteine 281, and glutamate 382. The Nucleophile role is filled by cysteine 281. Cysteine 281 is modified (cysteine sulfenic acid (-SOH)). The K(+) site is built by lysine 452 and glycine 455. The active-site Charge relay system is glutamate 459.

This sequence belongs to the aldehyde dehydrogenase family. Dimer of dimers. K(+) is required as a cofactor.

The enzyme catalyses betaine aldehyde + NAD(+) + H2O = glycine betaine + NADH + 2 H(+). It functions in the pathway amine and polyamine biosynthesis; betaine biosynthesis via choline pathway; betaine from betaine aldehyde: step 1/1. In terms of biological role, involved in the biosynthesis of the osmoprotectant glycine betaine. Catalyzes the irreversible oxidation of betaine aldehyde to the corresponding acid. The chain is Betaine aldehyde dehydrogenase from Vibrio parahaemolyticus serotype O3:K6 (strain RIMD 2210633).